Here is a 568-residue protein sequence, read N- to C-terminus: Methionine--tRNA ligase (568 aa).

Positions 10-20 (PYVQSVPHLGN) match the 'HIGH' region motif. Cys-143, Cys-146, Cys-156, and Cys-159 together coordinate Zn(2+). Positions 333 to 337 (KFSKS) match the 'KMSKS' region motif. Lys-336 contacts ATP.

Belongs to the class-I aminoacyl-tRNA synthetase family. MetG type 1 subfamily. Zn(2+) serves as cofactor.

The protein localises to the cytoplasm. The enzyme catalyses tRNA(Met) + L-methionine + ATP = L-methionyl-tRNA(Met) + AMP + diphosphate. Its function is as follows. Is required not only for elongation of protein synthesis but also for the initiation of all mRNA translation through initiator tRNA(fMet) aminoacylation. This is Methionine--tRNA ligase from Metallosphaera sedula (strain ATCC 51363 / DSM 5348 / JCM 9185 / NBRC 15509 / TH2).